Consider the following 53-residue polypeptide: UPF0391 membrane protein PputGB1_0151 (53 aa).

2 consecutive transmembrane segments (helical) span residues 4-24 (WAITFLIIAIVAAVLGFGGIA) and 29-49 (GIAKILFIVFLVLFVASFFFG).

The protein belongs to the UPF0391 family.

The protein localises to the cell membrane. This chain is UPF0391 membrane protein PputGB1_0151, found in Pseudomonas putida (strain GB-1).